The chain runs to 430 residues: Adenylosuccinate synthetase (430 aa).

Residues 12 to 18 (GDEGKGK) and 40 to 42 (GHT) each bind GTP. The Proton acceptor role is filled by aspartate 13. Residues aspartate 13 and glycine 40 each coordinate Mg(2+). Residues 13-16 (DEGK), 38-41 (NAGH), threonine 128, arginine 142, glutamine 223, threonine 238, and arginine 302 each bind IMP. Histidine 41 (proton donor) is an active-site residue. 298 to 304 (TTTGRPR) contacts substrate. GTP is bound by residues arginine 304, 330 to 332 (SID), and 412 to 414 (SVG).

Belongs to the adenylosuccinate synthetase family. As to quaternary structure, homodimer. Requires Mg(2+) as cofactor.

Its subcellular location is the cytoplasm. It catalyses the reaction IMP + L-aspartate + GTP = N(6)-(1,2-dicarboxyethyl)-AMP + GDP + phosphate + 2 H(+). Its pathway is purine metabolism; AMP biosynthesis via de novo pathway; AMP from IMP: step 1/2. Its function is as follows. Plays an important role in the de novo pathway of purine nucleotide biosynthesis. Catalyzes the first committed step in the biosynthesis of AMP from IMP. This Bacillus licheniformis (strain ATCC 14580 / DSM 13 / JCM 2505 / CCUG 7422 / NBRC 12200 / NCIMB 9375 / NCTC 10341 / NRRL NRS-1264 / Gibson 46) protein is Adenylosuccinate synthetase.